Reading from the N-terminus, the 383-residue chain is Acetylornithine deacetylase (383 aa).

A Zn(2+)-binding site is contributed by H80. Residue D82 is part of the active site. D112 lines the Zn(2+) pocket. E144 is an active-site residue. E145, E169, and H355 together coordinate Zn(2+).

It belongs to the peptidase M20A family. ArgE subfamily. In terms of assembly, homodimer. Zn(2+) is required as a cofactor. Co(2+) serves as cofactor. The cofactor is glutathione.

The protein localises to the cytoplasm. The enzyme catalyses N(2)-acetyl-L-ornithine + H2O = L-ornithine + acetate. The protein operates within amino-acid biosynthesis; L-arginine biosynthesis; L-ornithine from N(2)-acetyl-L-ornithine (linear): step 1/1. Its function is as follows. Catalyzes the hydrolysis of the amide bond of N(2)-acetylated L-amino acids. Cleaves the acetyl group from N-acetyl-L-ornithine to form L-ornithine, an intermediate in L-arginine biosynthesis pathway, and a branchpoint in the synthesis of polyamines. The polypeptide is Acetylornithine deacetylase (Shigella sonnei (strain Ss046)).